The chain runs to 476 residues: MAPGLARISLRSQLLPLVPLLLLLRGAGCGHRVPSWSSLPSAADSVQRDRDLQQSPGDAAAALGPGAQDIVAVHMLRLYEKYNRRGAPPGGGNTVRSFRARLDVIDQKPVYFFNLTSMQDSEMILTATFHFYSEPPRWPRAREVFCKPRAKNASCRLLTPGLPARLHLIFRSLSQNTATQGLLRGAMALTPPPRGLWQAKDISSIIKAARRDGELLLSAQLDSGEKDLGVPRPSSHMPYILVYANDLAISEPNSVAVTLQRYDPFPAGDFEPGAAPNSSADPRVRRAAQVSKPLQDNELPGLDERPAPALHAQHFHKHEFWSSPFRALKPRTGRKDRKKKDQDTFTPSSSQVLDFDEKTMQKARRRQWDEPRVCSRRYLKVDFADIGWNEWIISPKSFDAYYCAGACEFPMPKIVRPSNHATIQSIVRAVGIVPGIPEPCCVPDKMNSLGVLFLDENRNVVLKVYPNMSVETCACR.

An N-terminal signal peptide occupies residues 1–29 (MAPGLARISLRSQLLPLVPLLLLLRGAGC). A propeptide spanning residues 30–366 (GHRVPSWSSL…EKTMQKARRR (337 aa)) is cleaved from the precursor. N-linked (GlcNAc...) asparagine glycosylation is found at N114, N152, and N277. 2 disordered regions span residues 268-305 (GDFEPGAAPNSSADPRVRRAAQVSKPLQDNELPGLDER) and 330-358 (PRTGRKDRKKKDQDTFTPSSSQVLDFDEK). Intrachain disulfides connect C374-C441, C403-C473, and C407-C475. N467 carries N-linked (GlcNAc...) asparagine glycosylation.

The protein belongs to the TGF-beta family. Homodimer or heterodimer. Can form a non-covalent complex of the mature region and the pro-region. Costa, costicartilage, femur, calvaria, trachea, aorta and brain. Predominantly in the cerebellum.

The protein resides in the secreted. In terms of biological role, growth factor involved in osteogenesis and adipogenesis. Plays an inhibitory role in the process of osteoblast differentiation via SMAD2/3 pathway. Plays an inhibitory role in the process of adipogenesis. In Rattus norvegicus (Rat), this protein is Growth/differentiation factor 10.